The following is a 142-amino-acid chain: Large ribosomal subunit protein uL13 (142 aa).

The protein belongs to the universal ribosomal protein uL13 family. As to quaternary structure, part of the 50S ribosomal subunit.

Functionally, this protein is one of the early assembly proteins of the 50S ribosomal subunit, although it is not seen to bind rRNA by itself. It is important during the early stages of 50S assembly. In Dictyoglomus thermophilum (strain ATCC 35947 / DSM 3960 / H-6-12), this protein is Large ribosomal subunit protein uL13.